The following is a 299-amino-acid chain: Homoserine kinase (299 aa).

Position 85–95 (85–95 (PMSRGLGSSAT)) interacts with ATP.

This sequence belongs to the GHMP kinase family. Homoserine kinase subfamily.

It is found in the cytoplasm. The enzyme catalyses L-homoserine + ATP = O-phospho-L-homoserine + ADP + H(+). Its pathway is amino-acid biosynthesis; L-threonine biosynthesis; L-threonine from L-aspartate: step 4/5. Functionally, catalyzes the ATP-dependent phosphorylation of L-homoserine to L-homoserine phosphate. The chain is Homoserine kinase from Clostridium novyi (strain NT).